The chain runs to 109 residues: B melanoma antigen 2 (109 aa).

Residues 1–17 form the signal peptide; the sequence is MAAGVVFLALSAQLLQA.

This sequence belongs to the BAGE family. In terms of tissue distribution, not expressed in normal tissues except in testis. Expressed in 22% of melanomas, in bladder and lung carcinomas.

It is found in the secreted. Functionally, unknown. Candidate gene encoding tumor antigens. This chain is B melanoma antigen 2 (BAGE2), found in Homo sapiens (Human).